Here is a 59-residue protein sequence, read N- to C-terminus: Insertion element IS986 uncharacterized 6.6 kDa protein (59 aa).

The segment at 1-26 (MRKWVRQAQVDAGARPGTTTEESAEI) is disordered.

This sequence belongs to the transposase 8 family.

The chain is Insertion element IS986 uncharacterized 6.6 kDa protein from Mycobacterium tuberculosis.